The chain runs to 48 residues: uncharacterized protein (48 aa).

This is an uncharacterized protein from Acidianus filamentous virus 2 (isolate Italy/Pozzuoli) (AFV-2).